A 314-amino-acid chain; its full sequence is O-antigen chain rhamnosyltransferase RfbN (314 aa).

It belongs to the glycosyltransferase 2 family.

The enzyme catalyses alpha-D-galactosyl-di-trans,octa-cis-undecaprenyl diphosphate + dTDP-beta-L-rhamnose = alpha-L-rhamnosyl-(1-&gt;3)-alpha-D-galactosyl-1-diphospho-di-trans,octa-cis-undecaprenol + dTDP + H(+). It participates in bacterial outer membrane biogenesis; LPS O-antigen biosynthesis. Rhamnosyltransferase involved in the biosynthesis of the repeat unit of the lipopolysaccharide (LPS) O-antigen region. Catalyzes the addition of a rhamnose to the galactosyl-undecaprenyl diphosphate intermediate. The protein is O-antigen chain rhamnosyltransferase RfbN of Salmonella typhimurium (strain LT2 / SGSC1412 / ATCC 700720).